Consider the following 253-residue polypeptide: 3-dehydroquinate dehydratase (253 aa).

3-dehydroquinate contacts are provided by residues 46–48 (EFR) and arginine 82. Catalysis depends on histidine 143, which acts as the Proton donor/acceptor. Catalysis depends on lysine 170, which acts as the Schiff-base intermediate with substrate. Residues arginine 213, serine 232, and glutamine 236 each contribute to the 3-dehydroquinate site.

It belongs to the type-I 3-dehydroquinase family. Homodimer.

The catalysed reaction is 3-dehydroquinate = 3-dehydroshikimate + H2O. Its pathway is metabolic intermediate biosynthesis; chorismate biosynthesis; chorismate from D-erythrose 4-phosphate and phosphoenolpyruvate: step 3/7. In terms of biological role, involved in the third step of the chorismate pathway, which leads to the biosynthesis of aromatic amino acids. Catalyzes the cis-dehydration of 3-dehydroquinate (DHQ) and introduces the first double bond of the aromatic ring to yield 3-dehydroshikimate. In Clostridium novyi (strain NT), this protein is 3-dehydroquinate dehydratase.